The following is a 720-amino-acid chain: Probable ATP-dependent RNA helicase DHX35 (720 aa).

The region spanning 64 to 229 (LYLIENYQTV…FNQNETSDPA (166 aa)) is the Helicase ATP-binding domain. Residue 77 to 84 (GETGCGKS) coordinates ATP. The DEAH box signature appears at 176–179 (DEAH). A Helicase C-terminal domain is found at 261-438 (TVETVVKIHQ…PVILQLKALG (178 aa)).

The protein belongs to the DEAD box helicase family. DEAH subfamily. As to quaternary structure, identified in the spliceosome C complex.

The catalysed reaction is ATP + H2O = ADP + phosphate + H(+). May be involved in pre-mRNA splicing. This is Probable ATP-dependent RNA helicase DHX35 (DHX35) from Pongo abelii (Sumatran orangutan).